Reading from the N-terminus, the 99-residue chain is Malonate decarboxylase acyl carrier protein (99 aa).

Ser25 is subject to O-(phosphoribosyl dephospho-coenzyme A)serine.

The protein belongs to the MdcC family. In terms of processing, covalently binds the prosthetic group of malonate decarboxylase.

It is found in the cytoplasm. Its function is as follows. Subunit of malonate decarboxylase, it is an acyl carrier protein to which acetyl and malonyl thioester residues are bound via a 2'-(5''-phosphoribosyl)-3'-dephospho-CoA prosthetic group and turn over during the catalytic mechanism. This chain is Malonate decarboxylase acyl carrier protein, found in Pseudomonas savastanoi pv. phaseolicola (strain 1448A / Race 6) (Pseudomonas syringae pv. phaseolicola (strain 1448A / Race 6)).